A 264-amino-acid chain; its full sequence is COP9 signalosome complex subunit 7b (264 aa).

The residue at position 2 (Ala2) is an N-acetylalanine. Residues 2–159 (AGEQKPSSNL…QLLEVDFCIG (158 aa)) form the PCI domain. A coiled-coil region spans residues 188–237 (IEQQVLRANQYKENHNRTQQQVEAEVTNIKKTLKATASSSAQEMEQQLAE). The segment covering 223–232 (TASSSAQEME) has biased composition (polar residues). A disordered region spans residues 223 to 264 (TASSSAQEMEQQLAERECPPHAEQRQPTKKMSKVKGLVSSRH). Basic and acidic residues predominate over residues 235-248 (LAERECPPHAEQRQ). Ser261 carries the phosphothreonine modification. A Phosphoserine modification is found at Arg263.

The protein belongs to the CSN7/EIF3M family. CSN7 subfamily. Component of the CSN complex, composed of COPS1/GPS1, COPS2, COPS3, COPS4, COPS5, COPS6, COPS7 (COPS7A or COPS7B), COPS8 and COPS9 isoform 1. In the complex, it probably interacts directly with COPS1, COPS2, COPS4, COPS5, COPS6 and COPS8. Interacts with EIF3S6. In terms of assembly, (Microbial infection) Interacts with vaccinia virus protein C9L.

The protein resides in the cytoplasm. Its subcellular location is the nucleus. In terms of biological role, component of the COP9 signalosome complex (CSN), a complex involved in various cellular and developmental processes. The CSN complex is an essential regulator of the ubiquitin (Ubl) conjugation pathway by mediating the deneddylation of the cullin subunits of SCF-type E3 ligase complexes, leading to decrease the Ubl ligase activity of SCF-type complexes such as SCF, CSA or DDB2. The complex is also involved in phosphorylation of p53/TP53, JUN, I-kappa-B-alpha/NFKBIA, ITPK1 and IRF8/ICSBP, possibly via its association with CK2 and PKD kinases. CSN-dependent phosphorylation of TP53 and JUN promotes and protects degradation by the Ubl system, respectively. In Homo sapiens (Human), this protein is COP9 signalosome complex subunit 7b (COPS7B).